Consider the following 2963-residue polypeptide: tRNA nuclease CdiA (2963 aa).

The N-terminal stretch at methionine 1 to alanine 29 is a signal peptide. Positions alanine 35–histidine 320 are two-partner system transport domain (TPS). Residues glycine 573 to asparagine 1074 form an FHA-1 region. The interval arginine 1075 to aspartate 1342 is receptor binding domain (RBD). The segment at tyrosine 1343 to glutamine 1528 is YP domain. The periplasmic FHA-1 repeat (pFR) stretch occupies residues glycine 1529 to asparagine 1751. Over residues threonine 1759–threonine 1770 the composition is skewed to basic and acidic residues. Disordered regions lie at residues threonine 1759–serine 1787 and serine 1992–alanine 2012. Positions glutamine 1762 to lysine 2314 are FHA-2. The segment covering threonine 1771–glycine 1782 has biased composition (polar residues). The short motif at valine 2694–asparagine 2697 is the VEDN CT cleavage motif element. The segment at valine 2694–asparagine 2963 is C-terminal effector domain (CT).

The protein in the N-terminal section; belongs to the CdiA toxin family. It in the C-terminal section; belongs to the bacterial EndoU family. As to quaternary structure, forms a 1:1 complex with cognate immunity protein CdiI.

The protein resides in the secreted. It is found in the target cell. It localises to the target cell cytoplasm. In terms of biological role, toxic component of a toxin-immunity protein module, which functions as a cellular contact-dependent growth inhibition (CDI) system. CDI modules allow bacteria to communicate with and inhibit the growth of closely related neighboring bacteria in a contact-dependent fashion. Targeting of the CT domain (residues 2824-2963) in the absence of immunity protein inhibits cell growth and causes tRNA(UUC-Glu) cleavage in the anticodon loop; expression of cognate immunity protein CdiI-43969 neutralizes growth inhibition and tRNA(UUC-Glu) remains intact, whereas non-cognate immunity proteins do not confer protection from the toxic effects. Its function is as follows. The CdiA protein is thought to be exported from the cell through the central lumen of CdiB, the other half of its two-partner system (TPS). The TPS domain probably remains associated with CdiB while the FHA-1 domain forms an extended filament with the receptor-binding domain (RBD) at its extremity; in the secretion arrested state the C-terminus of the RBD and YP domains form a hairpin-like structure as the FHA-2, PT and CT domains are periplasmic. The YP domain is probably responsible for this arrest at the point where it re-enters the host cell periplasm. Upon binding to a target cell outer membrane receptor a signal is transmitted to activate secretion. The filament elongates slightly, the rest of CdiA is secreted and the FHA-2 domain becomes stably associated with the target cell's outer membrane where it facilitates entry of the toxic CT domain into the target cell periplasm. From there the toxic CT domain is cleaved and gains access to the target cell cytoplasm via an inner membrane protein. The chain is tRNA nuclease CdiA from Yersinia mollaretii (strain ATCC 43969 / DSM 18520 / CIP 103324 / CNY 7263 / WAIP 204).